Here is a 152-residue protein sequence, read N- to C-terminus: Actin-related protein 2/3 complex subunit 5-B (152 aa).

The segment at 21–44 (NKFVDDQLQEEPAEPQGPDEAEVD) is disordered. The segment covering 27-43 (QLQEEPAEPQGPDEAEV) has biased composition (acidic residues).

It belongs to the ARPC5 family. Component of the Arp2/3 complex composed of actr2/arp2, actr3/arp3, arpc1 (arpc1a or arpc1b), arpc2, arpc3, arpc4 and arpc5.

It is found in the cytoplasm. The protein localises to the cytoskeleton. It localises to the cell projection. Its subcellular location is the nucleus. Component of the Arp2/3 complex, a multiprotein complex that mediates actin polymerization upon stimulation by nucleation-promoting factor (NPF). The Arp2/3 complex mediates the formation of branched actin networks in the cytoplasm, providing the force for cell motility. In addition to its role in the cytoplasmic cytoskeleton, the Arp2/3 complex also promotes actin polymerization in the nucleus, thereby regulating gene transcription and repair of damaged DNA. The Arp2/3 complex promotes homologous recombination (HR) repair in response to DNA damage by promoting nuclear actin polymerization, leading to drive motility of double-strand breaks (DSBs). The polypeptide is Actin-related protein 2/3 complex subunit 5-B (arpc5-b) (Xenopus laevis (African clawed frog)).